A 276-amino-acid polypeptide reads, in one-letter code: O-methyltransferase cnsE (276 aa).

Residues glutamine 110, 133–134 (DA), and histidine 155 contribute to the S-adenosyl-L-methionine site.

The protein belongs to the methyltransferase superfamily. S-adenosyl-L-methionine serves as cofactor.

It participates in alkaloid biosynthesis. Its function is as follows. O-methyltransferase; part of the gene cluster that mediates the biosynthesis of communesins, a prominent class of indole alkaloids with great potential as pharmaceuticals. Communesins are biosynthesized by the coupling of tryptamine and aurantioclavine, two building blocks derived from L-tryptophan. The L-tryptophan decarboxylase cnsB converts L-tryptophan to tryptamine, whereas the tryptophan dimethylallyltransferase cnsF converts L-tryptophan to 4-dimethylallyl tryptophan which is further transformed to aurantioclavine by the aurantioclavine synthase cnsA, probably aided by the catalase cnsD. The cytochrome P450 monooxygenase cnsC catalyzes the heterodimeric coupling between the two different indole moieties, tryptamine and aurantioclavine, to construct vicinal quaternary stereocenters and yield the heptacyclic communesin scaffold. The O-methyltransferase cnsE then methylates the communesin scaffold to produce communesin K, the simplest characterized communesin that contains the heptacyclic core. The dioxygenase cnsJ converts communesin K into communesin I. Acylation to introduce the hexadienyl group at position N16 of communesin I by the acyltransferase cnsK leads to the production of communesin B. The hexadienyl group is produced by the highly reducing polyketide synthase cnsI, before being hydrolytically removed from cnsI by the serine hydrolase cnsH, converted into hexadienyl-CoA by the CoA ligase cnsG, and then transferred to communesin I by cnsK. Surprisingly, cnsK may also be a promiscuous acyltransferase that can tolerate a range of acyl groups, including acetyl-, propionyl-, and butyryl-CoA, which lead to communesins A, G and H respectively. The roles of the alpha-ketoglutarate-dependent dioxygenases cnsM and cnsP have still to be determined. The polypeptide is O-methyltransferase cnsE (Penicillium expansum (Blue mold rot fungus)).